Here is a 614-residue protein sequence, read N- to C-terminus: Phosphomethylpyrimidine synthase (614 aa).

Substrate is bound by residues asparagine 230, methionine 259, tyrosine 288, histidine 324, 344 to 346 (SRG), 385 to 388 (DGLR), and glutamate 424. Histidine 428 provides a ligand contact to Zn(2+). Tyrosine 451 is a substrate binding site. Residue histidine 492 participates in Zn(2+) binding. [4Fe-4S] cluster is bound by residues cysteine 572, cysteine 575, and cysteine 580.

It belongs to the ThiC family. In terms of assembly, homodimer. [4Fe-4S] cluster is required as a cofactor.

It carries out the reaction 5-amino-1-(5-phospho-beta-D-ribosyl)imidazole + S-adenosyl-L-methionine = 4-amino-2-methyl-5-(phosphooxymethyl)pyrimidine + CO + 5'-deoxyadenosine + formate + L-methionine + 3 H(+). It functions in the pathway cofactor biosynthesis; thiamine diphosphate biosynthesis. In terms of biological role, catalyzes the synthesis of the hydroxymethylpyrimidine phosphate (HMP-P) moiety of thiamine from aminoimidazole ribotide (AIR) in a radical S-adenosyl-L-methionine (SAM)-dependent reaction. The sequence is that of Phosphomethylpyrimidine synthase from Stenotrophomonas maltophilia (strain K279a).